A 196-amino-acid chain; its full sequence is Calcium channel flower (196 aa).

3 consecutive transmembrane segments (helical) span residues 35-55 (LGIV…LSII), 70-92 (LAGF…QVGS), and 113-133 (AVPP…GLIF).

It belongs to the calcium channel flower family. Homomultimer. Associates with the dally/ magu complex.

The protein localises to the cell membrane. The protein resides in the cytoplasmic vesicle. It localises to the secretory vesicle. Its subcellular location is the synaptic vesicle membrane. It is found in the presynaptic cell membrane. The protein localises to the endosome. Channel activity is inhibited by La(3+), which reduces Ca(2+) influx and thus inhibits it's function in promoting activity-dependent bulk endocytosis (ADBE) in response to high stimuli. In terms of biological role, transmembrane protein which mediates synaptic endocytosis, fitness-based cell culling, neuronal culling, morphogen gradient scaling, and calcium transport. Regulates synaptic endocytosis and hence couples exo- with endocytosis. Controls two major modes of synaptic vesicle (SV) endocytosis in the synaptic boutons of neuromuscular junctions (NMJs); Ca(2+) channel-independent Clathrin-mediated endocytosis (CME) in response to mild stimulation, and Ca(2+) channel-dependent activity-dependent bulk endocytosis (ADBE) in response to strong stimulation. Functions in ADBE and subsequent SV reformation from bulk endosomes by initiating Ca(2+) channel-dependent phosphatidylinositol 4,5-bisphosphate (PtdIns(4,5)P2) compartmentalization in synaptic boutons. There it acts at the periactive zone to provide the low Ca(2+) levels required to initiate Calcineurin activation and upregulate PtdIns(4,5)P2. Conversely PtdIns(4,5)P2 enhances fwe Ca(2+) channel-activity, establishing a positive feedback loop that induces PtdIns(4,5)P2 microdomain at the periactive zone. These microdomains trigger bulk membrane invagination (i.e. ADBE) by triggering actin polymerization while also promoting localization of fwe to bulk endosomes, thereby removing the ADBE trigger to reduce endocytosis and prevent excess membrane uptake. PtdIns(4,5)P2 then promotes SV reformation from the bulk endosomes, to coordinate ADBE and subsequent SV reformation. Different combinations of the flower isoforms at the cell membrane are also required for the identification and elimination of suboptimal or supernumerary cells during development, regeneration, and adulthood. Required for the recognition and elimination of unfit cells in the developing wing during cell competition. In the developing pupal retina, mediates the elimination of unwanted postmitotic neurons, including supernumerary photoreceptor neurons that form at the periphery of the retina and are contained within incomplete ommatidia units. Also required for efficient elimination and replacement of old neurons by newly generated neurons during regeneration in the adult brain following mechanical injury. Downstream of the flower fitness fingerprints, cells identified as unwanted or unfit are eliminated via apoptosis through the expression of ahuizotl (azot). However, the cells marked for elimination by the flower isoforms only undergo apoptosis if additional thresholds are met; (1) their neighboring fit/healthy cells express different levels of the fwe isoforms, and (2) the levels of the protective signal SPARC expressed by the loser or unwanted cells are unable to inhibit caspase activation. These additional thresholds for flower-mediated apoptosis, allows useful cells to recover from transient and limited stress before they are unnecessarily eliminated. Functions with dally and magu in a mechanism of scaling, which utilises apoptosis to ensure that the dpp morphogen gradient, which mediates organ growth, remains proportional to the size of the growing wing. In this mechanism, fwe represses dally- and Magu-dependent activity in expanding the gradient, and dally/Magu inhibits fwe-dependent apoptosis to keep cell death rate low. When the levels of these different proteins are optimally regulated the gradient correctly scales with organ growth but when this fails, fwe-mediated apoptosis is activated to trim the developing tissue to match the correct size of the gradient. The sequence is that of Calcium channel flower from Drosophila grimshawi (Hawaiian fruit fly).